Consider the following 187-residue polypeptide: Elongation factor P (187 aa).

It belongs to the elongation factor P family.

The protein localises to the cytoplasm. The protein operates within protein biosynthesis; polypeptide chain elongation. In terms of biological role, involved in peptide bond synthesis. Stimulates efficient translation and peptide-bond synthesis on native or reconstituted 70S ribosomes in vitro. Probably functions indirectly by altering the affinity of the ribosome for aminoacyl-tRNA, thus increasing their reactivity as acceptors for peptidyl transferase. In Syntrophus aciditrophicus (strain SB), this protein is Elongation factor P.